The following is a 359-amino-acid chain: Phospho-N-acetylmuramoyl-pentapeptide-transferase (359 aa).

10 helical membrane passes run 3–23 (QILI…PVLI), 55–75 (VAIL…GLAF), 80–100 (IGAS…VGFI), 117–137 (TAKT…VLQF), 156–176 (IATV…IVSA), 187–207 (LDGL…LITF), 231–251 (LALI…WNAA), 255–275 (IFMG…LSVT), 280–300 (ILAV…VLQI), and 334–354 (FWLL…GEWL).

Belongs to the glycosyltransferase 4 family. MraY subfamily. Mg(2+) serves as cofactor.

It localises to the cell membrane. It catalyses the reaction UDP-N-acetyl-alpha-D-muramoyl-L-alanyl-gamma-D-glutamyl-meso-2,6-diaminopimeloyl-D-alanyl-D-alanine + di-trans,octa-cis-undecaprenyl phosphate = di-trans,octa-cis-undecaprenyl diphospho-N-acetyl-alpha-D-muramoyl-L-alanyl-D-glutamyl-meso-2,6-diaminopimeloyl-D-alanyl-D-alanine + UMP. Its pathway is cell wall biogenesis; peptidoglycan biosynthesis. In terms of biological role, catalyzes the initial step of the lipid cycle reactions in the biosynthesis of the cell wall peptidoglycan: transfers peptidoglycan precursor phospho-MurNAc-pentapeptide from UDP-MurNAc-pentapeptide onto the lipid carrier undecaprenyl phosphate, yielding undecaprenyl-pyrophosphoryl-MurNAc-pentapeptide, known as lipid I. This is Phospho-N-acetylmuramoyl-pentapeptide-transferase from Mycobacterium tuberculosis (strain ATCC 25177 / H37Ra).